A 394-amino-acid chain; its full sequence is Isopentenyl-diphosphate delta-isomerase (394 aa).

10–11 (RK) is a substrate binding site. FMN contacts are provided by residues Thr67, 68 to 70 (GMT), Ser101, and Asn129. A substrate-binding site is contributed by 101 to 103 (SQR). Residue Gln168 participates in substrate binding. Glu169 contributes to the Mg(2+) binding site. FMN contacts are provided by residues Lys200, Ser225, Thr230, 279–281 (GMR), and 300–301 (AL).

This sequence belongs to the IPP isomerase type 2 family. Homooctamer. Dimer of tetramers. Requires FMN as cofactor. NADPH is required as a cofactor. The cofactor is Mg(2+).

The protein resides in the cytoplasm. The enzyme catalyses isopentenyl diphosphate = dimethylallyl diphosphate. Its function is as follows. Involved in the biosynthesis of isoprenoids. Catalyzes the 1,3-allylic rearrangement of the homoallylic substrate isopentenyl (IPP) to its allylic isomer, dimethylallyl diphosphate (DMAPP). In Pyrococcus furiosus (strain ATCC 43587 / DSM 3638 / JCM 8422 / Vc1), this protein is Isopentenyl-diphosphate delta-isomerase.